The following is a 182-amino-acid chain: Large ribosomal subunit protein bL25 (182 aa).

This sequence belongs to the bacterial ribosomal protein bL25 family. CTC subfamily. In terms of assembly, part of the 50S ribosomal subunit; part of the 5S rRNA/L5/L18/L25 subcomplex. Contacts the 5S rRNA. Binds to the 5S rRNA independently of L5 and L18.

In terms of biological role, this is one of the proteins that binds to the 5S RNA in the ribosome where it forms part of the central protuberance. The chain is Large ribosomal subunit protein bL25 from Borrelia turicatae (strain 91E135).